The primary structure comprises 126 residues: Protein C10 (126 aa).

A2 carries the N-acetylalanine modification.

This sequence belongs to the UPF0456 family. As to expression, ubiquitously expressed, with higher expression in lung and fetal brain.

It localises to the cytoplasm. In terms of biological role, in brain, may be required for corpus callosum development. The sequence is that of Protein C10 (C12orf57) from Homo sapiens (Human).